A 258-amino-acid polypeptide reads, in one-letter code: MVLIRVLANLLILQLSYAQRSSELVIGGDECNINEHRFLVALYKSGRFRCGGTLINQEWVLTAAHCDRRNMEIKLGMHSKNVPNEDEQRRVPKEKFFCDSNKNHTQWNKDIMLIRLNSPVNNSTHIAPLSLPSNPPIVGSVCRIMGWGTITSPNETYPDVPHCANINLFNYTVCHGAHAGLPATSRTLCAGVLEEGKDTCKGDSGGPLICNGQFQGIVSWGGDPCAQPREPGVYTKVFDHLDWIQNIIAGNTTATCPL.

The first 18 residues, 1 to 18 (MVLIRVLANLLILQLSYA), serve as a signal peptide directing secretion. Residues 19-24 (QRSSEL) constitute a propeptide that is removed on maturation. Residues 25 to 249 (VIGGDECNIN…HLDWIQNIIA (225 aa)) form the Peptidase S1 domain. 6 cysteine pairs are disulfide-bonded: C31–C163, C50–C66, C98–C256, C142–C210, C174–C189, and C200–C225. The active-site Charge relay system is H65. N103 is a glycosylation site (N-linked (GlcNAc...) asparagine). D110 functions as the Charge relay system in the catalytic mechanism. N-linked (GlcNAc...) asparagine glycosylation is found at N121, N122, N154, and N170. The active-site Charge relay system is the S204. N-linked (GlcNAc...) asparagine glycosylation is present at N251.

Belongs to the peptidase S1 family. Snake venom subfamily. As to quaternary structure, monomer. In terms of tissue distribution, expressed by the venom gland.

It localises to the secreted. Its function is as follows. Snake venom serine protease that may act in the hemostasis system of the prey. The polypeptide is Snake venom serine protease KN13 (Trimeresurus stejnegeri (Chinese green tree viper)).